A 418-amino-acid chain; its full sequence is Putative heat shock protein HSP 90-alpha A4 (418 aa).

Asp33, Lys52, Phe78, and Arg204 together coordinate ATP. 2 disordered regions span residues 255–289 (EDLE…TSAK) and 383–418 (GLGT…RMEK). A compositionally biased stretch (basic and acidic residues) spans 265-274 (EKKKQEEGKQ).

It belongs to the heat shock protein 90 family. Homodimer.

It is found in the cytoplasm. Its function is as follows. Putative molecular chaperone that may promote the maturation, structural maintenance and proper regulation of specific target proteins. This Homo sapiens (Human) protein is Putative heat shock protein HSP 90-alpha A4 (HSP90AA4P).